A 203-amino-acid polypeptide reads, in one-letter code: Adenylyl-sulfate kinase (203 aa).

35-42 is a binding site for ATP; that stretch reads GLSGSGKS. The Phosphoserine intermediate role is filled by Ser-109.

It belongs to the APS kinase family.

It carries out the reaction adenosine 5'-phosphosulfate + ATP = 3'-phosphoadenylyl sulfate + ADP + H(+). It functions in the pathway sulfur metabolism; hydrogen sulfide biosynthesis; sulfite from sulfate: step 2/3. Functionally, catalyzes the synthesis of activated sulfate. The protein is Adenylyl-sulfate kinase of Geotalea daltonii (strain DSM 22248 / JCM 15807 / FRC-32) (Geobacter daltonii).